An 84-amino-acid polypeptide reads, in one-letter code: Cell division topological specificity factor (84 aa).

It belongs to the MinE family.

Prevents the cell division inhibition by proteins MinC and MinD at internal division sites while permitting inhibition at polar sites. This ensures cell division at the proper site by restricting the formation of a division septum at the midpoint of the long axis of the cell. The chain is Cell division topological specificity factor from Paraburkholderia phymatum (strain DSM 17167 / CIP 108236 / LMG 21445 / STM815) (Burkholderia phymatum).